A 646-amino-acid polypeptide reads, in one-letter code: UvrABC system protein C (646 aa).

A GIY-YIG domain is found at 16–95 (VEPGVYRFRD…IKEFDPRFNV (80 aa)). The UVR domain maps to 208-243 (DRFARALEQQMNAAAEQLDFERAARLRDDLSALKRA).

The protein belongs to the UvrC family. In terms of assembly, interacts with UvrB in an incision complex.

Its subcellular location is the cytoplasm. The UvrABC repair system catalyzes the recognition and processing of DNA lesions. UvrC both incises the 5' and 3' sides of the lesion. The N-terminal half is responsible for the 3' incision and the C-terminal half is responsible for the 5' incision. This chain is UvrABC system protein C, found in Mycobacterium bovis (strain BCG / Pasteur 1173P2).